The chain runs to 286 residues: 4-diphosphocytidyl-2-C-methyl-D-erythritol kinase (286 aa).

Lys11 is an active-site residue. Residue 93–103 (PFGAGLGGGSS) participates in ATP binding. Residue Asp135 is part of the active site.

The protein belongs to the GHMP kinase family. IspE subfamily.

It catalyses the reaction 4-CDP-2-C-methyl-D-erythritol + ATP = 4-CDP-2-C-methyl-D-erythritol 2-phosphate + ADP + H(+). Its pathway is isoprenoid biosynthesis; isopentenyl diphosphate biosynthesis via DXP pathway; isopentenyl diphosphate from 1-deoxy-D-xylulose 5-phosphate: step 3/6. Its function is as follows. Catalyzes the phosphorylation of the position 2 hydroxy group of 4-diphosphocytidyl-2C-methyl-D-erythritol. This Chlorobaculum parvum (strain DSM 263 / NCIMB 8327) (Chlorobium vibrioforme subsp. thiosulfatophilum) protein is 4-diphosphocytidyl-2-C-methyl-D-erythritol kinase.